A 471-amino-acid polypeptide reads, in one-letter code: 4-aminobutyrate aminotransferase (471 aa).

135–136 (GA) lines the pyridoxal 5'-phosphate pocket. Arginine 192 provides a ligand contact to substrate. Lysine 326 is modified (N6-(pyridoxal phosphate)lysine). Threonine 351 contributes to the pyridoxal 5'-phosphate binding site.

It belongs to the class-III pyridoxal-phosphate-dependent aminotransferase family. Homodimer and homotetramer. The cofactor is pyridoxal 5'-phosphate.

It is found in the cytoplasm. The catalysed reaction is 4-aminobutanoate + 2-oxoglutarate = succinate semialdehyde + L-glutamate. Its function is as follows. Required for the degradation of gamma-aminobutyric acid (GABA), which is important for utilization of GABA as nitrogen source and for oxidative stress tolerance. Deaminates GABA to succinate semialdehyde, which in turn is converted to succinate by the succinate-semialdehyde dehydrogenase UGA2. Cannot transaminate beta-alanine (BAL). In Saccharomyces cerevisiae (strain ATCC 204508 / S288c) (Baker's yeast), this protein is 4-aminobutyrate aminotransferase (UGA1).